The chain runs to 910 residues: Auxilin (910 aa).

3 consecutive repeat copies span residues 33 to 36 (NLKD), 37 to 40 (NLKD), and 41 to 44 (TLKD). A 3 X 4 AA approximate tandem repeats region spans residues 33–44 (NLKDNLKDTLKD). A Phosphatase tensin-type domain is found at 52–219 (SVTSYTKGDL…GYMCDLLADK (168 aa)). Position 109 is a phosphoserine (Ser109). Cys161 (phosphocysteine intermediate) is an active-site residue. The C2 tensin-type domain occupies 225-363 (FKPLTIKSIT…FQVTLDVELQ (139 aa)). The short motif at 406–414 (PIDIPPDNP) is the SH3-binding element. The tract at residues 448 to 772 (QESEQSDDEL…RGKAAANLEG (325 aa)) is disordered. A phosphoserine mark is found at Ser450, Ser453, Ser560, and Ser567. Positions 547–569 (PSGPTSTQSTPRRSATSTSASPT) are enriched in low complexity. Over residues 596-626 (FLNTASASSDPFLQPTRSPSPTVHASSTPAV) the composition is skewed to polar residues. A compositionally biased stretch (low complexity) spans 651 to 666 (SAATSPTGSSHGTPTH). Over residues 715–725 (MGGGWQQGGGY) the composition is skewed to gly residues. Positions 732 to 758 (SKPQSSMPHSSPQNRPNYNVSFSSMPG) are enriched in polar residues. Residues 846–910 (TKWKPVGMAD…FENQGQKPLY (65 aa)) form the J domain.

As to quaternary structure, forms a complex composed of HSPA8, CLTC and DNAJC6. Interacts with HSPA8/HSC70 in an ATP-dependent manner; this interaction stimulates the HSPA8's ATPase activity. Interacts with CLTC; this interaction produces a local change in heavy-chain contacts, creating a detectable global distortion of the clathrin coat. Interacts with AP2A2. Interacts with DNM1(GTP-bound form); this interaction allows clathrin-coated vesicle (CCV) formation at the plasma membrane. The N-terminus is blocked. In terms of processing, phosphorylation at Ser-567 modulates its ability to bind CLTC and therefore the synaptic vesicle endocytosis (SVE). As to expression, brain.

The protein resides in the cytoplasmic vesicle. It is found in the clathrin-coated vesicle. In terms of biological role, may act as a protein phosphatase and/or a lipid phosphatase. Co-chaperone that recruits HSPA8/HSC70 to clathrin-coated vesicles (CCVs) and promotes the ATP-dependent dissociation of clathrin from CCVs and participates in clathrin-mediated endocytosis of synaptic vesicles and their recycling and also in intracellular trafficking. Firstly, binds tightly to the clathrin cages, at a ratio of one DNAJC6 per clathrin triskelion. The HSPA8:ATP complex then binds to the clathrin-auxilin cage, initially at a ratio of one HSPA8 per triskelion leading to ATP hydrolysis stimulation and causing a conformational change in the HSPA8. This cycle is repeated three times to drive to a complex containing the clathrin-auxilin cage associated to three HSPA8:ADP complex. The ATP hydrolysis of the third HSPA8:ATP complex leads to a concerted dismantling of the cage into component triskelia. Then, dissociates from the released triskelia and be recycled to initiate another cycle of HSPA8's recruitment. Also acts during the early steps of clathrin-coated vesicle (CCV) formation through its interaction with the GTP bound form of DNM1. In Bos taurus (Bovine), this protein is Auxilin.